The primary structure comprises 197 residues: ATP synthase subunit delta (197 aa).

Belongs to the ATPase delta chain family. In terms of assembly, F-type ATPases have 2 components, F(1) - the catalytic core - and F(0) - the membrane proton channel. F(1) has five subunits: alpha(3), beta(3), gamma(1), delta(1), epsilon(1). F(0) has three main subunits: a(1), b(2) and c(10-14). The alpha and beta chains form an alternating ring which encloses part of the gamma chain. F(1) is attached to F(0) by a central stalk formed by the gamma and epsilon chains, while a peripheral stalk is formed by the delta and b chains.

The protein localises to the cell inner membrane. F(1)F(0) ATP synthase produces ATP from ADP in the presence of a proton or sodium gradient. F-type ATPases consist of two structural domains, F(1) containing the extramembraneous catalytic core and F(0) containing the membrane proton channel, linked together by a central stalk and a peripheral stalk. During catalysis, ATP synthesis in the catalytic domain of F(1) is coupled via a rotary mechanism of the central stalk subunits to proton translocation. Its function is as follows. This protein is part of the stalk that links CF(0) to CF(1). It either transmits conformational changes from CF(0) to CF(1) or is implicated in proton conduction. The sequence is that of ATP synthase subunit delta from Bartonella henselae (strain ATCC 49882 / DSM 28221 / CCUG 30454 / Houston 1) (Rochalimaea henselae).